A 59-amino-acid chain; its full sequence is MAVQQNKKSPSKRGMHRAHDFLTAPATAVEATTGEAHLRHHISPNGYYRGRKVVKTKND.

The interval 35-59 (EAHLRHHISPNGYYRGRKVVKTKND) is disordered. Basic residues predominate over residues 49-59 (RGRKVVKTKND).

This sequence belongs to the bacterial ribosomal protein bL32 family.

The chain is Large ribosomal subunit protein bL32 from Polynucleobacter asymbioticus (strain DSM 18221 / CIP 109841 / QLW-P1DMWA-1) (Polynucleobacter necessarius subsp. asymbioticus).